The chain runs to 191 residues: Probable GTP-binding protein EngB (191 aa).

The region spanning 19–188 (NIPEICFMGR…HKKIFELFVE (170 aa)) is the EngB-type G domain. GTP is bound by residues 27 to 34 (GRSNVGKS), 53 to 57 (GRTQL), 70 to 73 (DLPG), 136 to 139 (NKFD), and 167 to 169 (AST). Residues Ser34 and Thr55 each coordinate Mg(2+).

Belongs to the TRAFAC class TrmE-Era-EngA-EngB-Septin-like GTPase superfamily. EngB GTPase family. Mg(2+) is required as a cofactor.

Functionally, necessary for normal cell division and for the maintenance of normal septation. The protein is Probable GTP-binding protein EngB of Mycoplasma genitalium (strain ATCC 33530 / DSM 19775 / NCTC 10195 / G37) (Mycoplasmoides genitalium).